The following is a 274-amino-acid chain: Penicillin-insensitive murein endopeptidase (274 aa).

A signal peptide spans 1-19; it reads MKNTVIALLALLASAGSLA. 3 cysteine pairs are disulfide-bonded: cysteine 44–cysteine 265, cysteine 187–cysteine 235, and cysteine 216–cysteine 223. Zn(2+)-binding residues include histidine 110, histidine 113, aspartate 120, aspartate 147, histidine 150, and histidine 211. Residues 224–263 form a disordered region; that stretch reads EDQAPPPPGDGCGAELQSWFEPPKPGSTPPVKKTPPPLPP. Positions 245 to 263 are enriched in pro residues; the sequence is PPKPGSTPPVKKTPPPLPP.

It belongs to the peptidase M74 family. In terms of assembly, dimer. Zn(2+) is required as a cofactor.

The protein resides in the periplasm. Its function is as follows. Murein endopeptidase that cleaves the D-alanyl-meso-2,6-diamino-pimelyl amide bond that connects peptidoglycan strands. Likely plays a role in the removal of murein from the sacculus. The chain is Penicillin-insensitive murein endopeptidase from Klebsiella pneumoniae subsp. pneumoniae (strain ATCC 700721 / MGH 78578).